The sequence spans 105 residues: Membrane-stabilizing protein A (105 aa).

A helical transmembrane segment spans residues 1 to 21 (MQFYLILLAILYLIVSFISIF). Over 22-29 (KMEVVFTR) the chain is Cytoplasmic. The chain crosses the membrane as a helical span at residues 30 to 50 (ILRIIMGVLLLFVLALTTMSF). Over 51–55 (PKENW) the chain is Extracellular. Residues 56 to 76 (WVFIVLLLLVGNVEVTGFKML) form a helical membrane-spanning segment. Residues 77 to 84 (KKDLKGVN) lie on the Cytoplasmic side of the membrane. The helical transmembrane segment at 85 to 105 (ILNLMSLFIFVIYFILTIVLF) threads the bilayer.

This sequence belongs to the MspA family.

The protein localises to the membrane. Its function is as follows. Plays a role in toxin production, resistance to host innate immune mechanisms, and iron homeostasis. This is Membrane-stabilizing protein A from Staphylococcus aureus (strain NCTC 8325 / PS 47).